The primary structure comprises 907 residues: MITKLFTKIIGSRNDRTVKALKKIVKQINELEPQFASLADVDLQAKTVEFRQRLEKGEELDSLLPEAFATVREASKRVFAMRHFDVQMMGGIVLNNNQIAEMKTGEGKTLTATLPAYLNALTGQGVHIVTVNDYLARRDAEWSRPLFAFLGMTVGCNLSGMSHEEKQAAYACDITYGTNNEFGFDYLRDNMAFAAEQRVQRPLYYALVDEVDSVLIDEARTPLIISGAAEDSSELYIKINTLVPLLQKQDKEDSEEYQGNGHYTVDEKARQAYLTENGQIFVEGWLKQQGLMGEDDSLFSVANITLLHHVNAALRANTLFERDVDYIVKDDEVIIVDEHTGRTMAGRRWSEGLHQAIEAKEGAKIRNENQTLASITFQNYFRLYEKLAGMTGTADTEAYEFQQIYGLETVVLPTNRPMIRDDMGDLVYLTEQEKYDAIIEDIKIRVAEQRPVLVGTISIENSELLSNILTKEGIEHKVLNAKFHAQEAQIVAQAGRPSAVTIATNMAGRGTDIVLGGSWQAEIDALENPTAEQIATIKSEWQVRHDAVITSGGLHIIGTERHESRRIDNQLRGRSGRQGDPGSSRFYLSMEDSLMRIFASDRVSGMMKKLGMEHGEAIEHPWVSKAIENAQRKVEGRNFDIRKNLLEFDDVANDQRKVVYEQRNELLESADISETIKLIRTDVLDRVIDQYIAPHSLDESWDIAGLELRLRTDFAIDLPIAQWIKEDDKLYEEKIRERIISEIEASYAHKEELAGHDVLRQFEKSVMLQTLDNLWKEHLAAMDHLRQGIHLRGYAQKNPKQEYKREAFELFTQMLEALKQQVVSVLCRIQVQEPDVDAIEEQRRQSDSAQVRTYSHEEINALAEDEAESVDGQAVEPFVRDGAKIGRNDPCPCGSGKKYKHCHGKLD.

ATP contacts are provided by residues glutamine 87, 105–109 (GEGKT), and aspartate 512. Cysteine 891, cysteine 893, cysteine 902, and histidine 903 together coordinate Zn(2+).

This sequence belongs to the SecA family. As to quaternary structure, monomer and homodimer. Part of the essential Sec protein translocation apparatus which comprises SecA, SecYEG and auxiliary proteins SecDF-YajC and YidC. Zn(2+) serves as cofactor.

The protein localises to the cell inner membrane. The protein resides in the cytoplasm. The enzyme catalyses ATP + H2O + cellular proteinSide 1 = ADP + phosphate + cellular proteinSide 2.. Part of the Sec protein translocase complex. Interacts with the SecYEG preprotein conducting channel. Has a central role in coupling the hydrolysis of ATP to the transfer of proteins into and across the cell membrane, serving both as a receptor for the preprotein-SecB complex and as an ATP-driven molecular motor driving the stepwise translocation of polypeptide chains across the membrane. The chain is Protein translocase subunit SecA from Tolumonas auensis (strain DSM 9187 / NBRC 110442 / TA 4).